The sequence spans 119 residues: Ribonuclease P protein component (119 aa).

It belongs to the RnpA family. Consists of a catalytic RNA component (M1 or rnpB) and a protein subunit.

The enzyme catalyses Endonucleolytic cleavage of RNA, removing 5'-extranucleotides from tRNA precursor.. Functionally, RNaseP catalyzes the removal of the 5'-leader sequence from pre-tRNA to produce the mature 5'-terminus. It can also cleave other RNA substrates such as 4.5S RNA. The protein component plays an auxiliary but essential role in vivo by binding to the 5'-leader sequence and broadening the substrate specificity of the ribozyme. The polypeptide is Ribonuclease P protein component (Streptococcus mutans serotype c (strain ATCC 700610 / UA159)).